The following is a 474-amino-acid chain: tRNA-2-methylthio-N(6)-dimethylallyladenosine synthase (474 aa).

The 118-residue stretch at 3-120 (KKLHIKTWGC…LPEMINSVRG (118 aa)) folds into the MTTase N-terminal domain. Positions 12, 49, 83, 157, 161, and 164 each coordinate [4Fe-4S] cluster. The Radical SAM core domain maps to 143 to 375 (RAEGPTAFVS…QERINQQAMA (233 aa)). The 64-residue stretch at 378-441 (RRMLGTTQRI…PNSLRGKVVR (64 aa)) folds into the TRAM domain.

This sequence belongs to the methylthiotransferase family. MiaB subfamily. Monomer. [4Fe-4S] cluster is required as a cofactor.

Its subcellular location is the cytoplasm. The enzyme catalyses N(6)-dimethylallyladenosine(37) in tRNA + (sulfur carrier)-SH + AH2 + 2 S-adenosyl-L-methionine = 2-methylsulfanyl-N(6)-dimethylallyladenosine(37) in tRNA + (sulfur carrier)-H + 5'-deoxyadenosine + L-methionine + A + S-adenosyl-L-homocysteine + 2 H(+). Its function is as follows. Catalyzes the methylthiolation of N6-(dimethylallyl)adenosine (i(6)A), leading to the formation of 2-methylthio-N6-(dimethylallyl)adenosine (ms(2)i(6)A) at position 37 in tRNAs that read codons beginning with uridine. This Salmonella enteritidis PT4 (strain P125109) protein is tRNA-2-methylthio-N(6)-dimethylallyladenosine synthase.